Consider the following 667-residue polypeptide: Soluble guanylate cyclase 89Da (667 aa).

Histidine 104 provides a ligand contact to heme. The tract at residues 337–364 (AQEFSESHPVDDDESAREDEIDPATGER) is disordered. Positions 347–358 (DDDESAREDEID) are enriched in acidic residues. A coiled-coil region spans residues 427 to 455 (QHCSKLEIMFEKEEQRSDELEKSLELADS). In terms of domain architecture, Guanylate cyclase spans 491–617 (SVIFLEVMNV…DTVNTASRME (127 aa)).

This sequence belongs to the adenylyl cyclase class-4/guanylyl cyclase family. In terms of assembly, heterodimer; with Gyc88E, in the presence of magnesium or manganese. It depends on heme as a cofactor.

Its subcellular location is the cytoplasm. It carries out the reaction GTP = 3',5'-cyclic GMP + diphosphate. With respect to regulation, probably not activated by nitric oxide (NO). Heterodimer also exhibits some stimulation, some compounds (SIN-1 and two of the NONOates) that were ineffective at stimulating Gyc-88E alone did stimulate the heterodimer. Heterodimers with Gyc-89Da and Gyc-89Db are activated in response to changing oxygen concentrations, alerting flies to hypoxic environments. Under normal oxygen concentrations, oxygen binds to the heme group and results in low levels of guanylyl cyclase activity. When exposed to reduced oxygen concentrations, the oxygen dissociates from the heme group resulting in activation of the enzyme. The chain is Soluble guanylate cyclase 89Da from Drosophila melanogaster (Fruit fly).